We begin with the raw amino-acid sequence, 403 residues long: 4,4'-dithiodibutanoate disulfide reductase (403 aa).

Gln103 serves as a coordination point for FMN. The active-site Proton donor is Tyr173. 348-349 (AR) serves as a coordination point for FMN.

It belongs to the NADH:flavin oxidoreductase/NADH oxidase family. It depends on FMN as a cofactor.

It catalyses the reaction 2 4-sulfanylbutanoate + NAD(+) = 4,4'-disulfanyldibutanoate + NADH + H(+). Its activity is regulated as follows. Inactivated by cobalt, nickel and zinc ions. Involved in the degradation of the organic disulfide 4,4'-dithiodibutyric acid (DTDB). Catalyzes the initial cleavage of DTDB into 2 molecules of 4-mercaptobutyric acid (4MB). Low activities are observed with other disulfide compounds, such as 3,3'-dithiodipropionic acid DTDP, 3,3'-thiodipropionic acid TDP and DTNB. The protein is 4,4'-dithiodibutanoate disulfide reductase of Rhodococcus erythropolis (Arthrobacter picolinophilus).